Consider the following 528-residue polypeptide: Neuronal acetylcholine receptor subunit alpha-2 (528 aa).

The N-terminal stretch at 1–23 (MGWPCRSIIPLLVWCFVTLQAAT) is a signal peptide. Over 24–239 (REQKQPHGFA…ITFYFVIRRL (216 aa)) the chain is Extracellular. Asparagine 54 and asparagine 104 each carry an N-linked (GlcNAc...) asparagine glycan. Cystine bridges form between cysteine 158–cysteine 172 and cysteine 222–cysteine 223. A run of 3 helical transmembrane segments spans residues 240-264 (PLFY…VFYL), 272-290 (ITLC…LLIT), and 306-327 (YLLF…VLNV). Residues 328 to 501 (HHRSPSTHTM…WKYVAMVIDR (174 aa)) lie on the Cytoplasmic side of the membrane. Residues 390-410 (DDKWEEEEEEEEEEEEEEEEE) are compositionally biased toward acidic residues. A disordered region spans residues 390 to 427 (DDKWEEEEEEEEEEEEEEEEEKAYPSRVPSGGSQGTQC). A helical transmembrane segment spans residues 502 to 520 (IFLWMFIIVCLLGTVGLFL).

This sequence belongs to the ligand-gated ion channel (TC 1.A.9) family. Acetylcholine receptor (TC 1.A.9.1) subfamily. Alpha-2/CHRNA2 sub-subfamily. Neuronal AChR is composed of two different types of subunits: alpha and non-alpha (beta). CHRNA2/alpha-2 subunit can be combined to CHRNB2/beta-2 or CHRNB4/beta-4 to give rise to functional receptors. Both CHRNA2:CHRNB2 and CHRNA2:CHRNB4 nAChR complexes are heteropentamers with two subtypes: LS (low agonist sensitivity) with a (CHRNA2)3:(CHRNB2/4)2 and HS (high agonist sensitivity) with a (CHRNA2)2:(CHRNB2/4)3 stoichiometries; the subtypes differ in their subunit binding interfaces which are involved in ligand binding.

The protein localises to the synaptic cell membrane. It is found in the cell membrane. It catalyses the reaction Ca(2+)(in) = Ca(2+)(out). The catalysed reaction is K(+)(in) = K(+)(out). The enzyme catalyses Na(+)(in) = Na(+)(out). Functionally, component of neuronal acetylcholine receptors (nAChRs) that function as pentameric, ligand-gated cation channels with high calcium permeability among other activities. nAChRs are excitatory neurotrasnmitter receptors formed by a collection of nAChR subunits known to mediate synaptic transmission in the nervous system and the neuromuscular junction. Each nAchR subunit confers differential attributes to channel properties, including activation, deactivation and desensitization kinetics, pH sensitivity, cation permeability, and binding to allosteric modulators. CHRNA2 forms heteropentameric neuronal acetylcholine receptors with CHRNB2 and CHRNB4 and plays a role in nicotine dependence. The sequence is that of Neuronal acetylcholine receptor subunit alpha-2 (CHRNA2) from Gallus gallus (Chicken).